Consider the following 588-residue polypeptide: MITRLSTLFLRTLREDPADAEVPSHKLLVRAGYIRRVAPGIYSWLPLGLRAVRNIEAVVREEMDAIGGQELLFPALLPREPYETTQRWTEYGDSLFRLKDRKGADYLLGPTHEEMFAATVKDLYNSYKDFPVTLYQIQTKYRDEERPRAGVLRGREFVMKDSYSFDMSDAGLDESYAKHRAAYQRIFDRLGLEYAICQATSGAMGGSASEEFLAVSENGEDTFVRSTSGNYAANVEAVVTQPGVERDIEGLPEAVTYETPVSETIDALVDWANSIDVQIEGREVTAADTLKCIVVKVREPGAEEAELTGILLPGDREVDMKRLEASLEPAEVELAVESDFADNPFLVKGYVGPVGLAKNGVKVLADPRVVTGTSWITGADEKERHVVGLVAGRDFTPDGFIEAAEIKEGDPAPAGEGTLTLARGIEIGHIFQLGRKYTEAFDVQILDENGKRAIPTMGSYGLGVTRLLAVLAEQRHDDAGLNWSVEVAPYQVHVVAANKDAAAIEAAERFAAELSAAGLDVLFDDRPKVSPGVKFKDAELLGMPFALILGRGYAEGKVELRVRGGEKSELDADQAVAQIVEMVAQARN.

Belongs to the class-II aminoacyl-tRNA synthetase family. ProS type 1 subfamily. As to quaternary structure, homodimer.

It localises to the cytoplasm. It catalyses the reaction tRNA(Pro) + L-proline + ATP = L-prolyl-tRNA(Pro) + AMP + diphosphate. In terms of biological role, catalyzes the attachment of proline to tRNA(Pro) in a two-step reaction: proline is first activated by ATP to form Pro-AMP and then transferred to the acceptor end of tRNA(Pro). As ProRS can inadvertently accommodate and process non-cognate amino acids such as alanine and cysteine, to avoid such errors it has two additional distinct editing activities against alanine. One activity is designated as 'pretransfer' editing and involves the tRNA(Pro)-independent hydrolysis of activated Ala-AMP. The other activity is designated 'posttransfer' editing and involves deacylation of mischarged Ala-tRNA(Pro). The misacylated Cys-tRNA(Pro) is not edited by ProRS. This Corynebacterium glutamicum (strain R) protein is Proline--tRNA ligase.